Reading from the N-terminus, the 190-residue chain is Elongation factor P-like protein (190 aa).

It belongs to the elongation factor P family.

The chain is Elongation factor P-like protein from Klebsiella pneumoniae subsp. pneumoniae (strain ATCC 700721 / MGH 78578).